We begin with the raw amino-acid sequence, 343 residues long: Diterpene cyclase DtcycB (343 aa).

Mg(2+)-binding residues include asparagine 219, serine 223, and glutamate 227.

This sequence belongs to the terpene synthase family. As to quaternary structure, homodimer. It depends on Mg(2+) as a cofactor.

It carries out the reaction (2E,6E,10E)-geranylgeranyl diphosphate + H2O = (R)-nephthenol + diphosphate. The catalysed reaction is (2E,6E,10E)-geranylgeranyl diphosphate = (R)-cembrene A + diphosphate. The enzyme catalyses (2E,6E,10E)-geranylgeranyl diphosphate + H2O = (1S,4E,8E,12E)-2,2,5,9,13-pentamethylcyclopentadeca-4,8,12-trien-1-ol + diphosphate. Functionally, diterpene cyclases that can form multiple diterpene products. The chain is Diterpene cyclase DtcycB from Streptomyces sp.